The primary structure comprises 284 residues: 2-dehydro-3-deoxyphosphooctonate aldolase (284 aa).

The protein belongs to the KdsA family.

It localises to the cytoplasm. It catalyses the reaction D-arabinose 5-phosphate + phosphoenolpyruvate + H2O = 3-deoxy-alpha-D-manno-2-octulosonate-8-phosphate + phosphate. The protein operates within carbohydrate biosynthesis; 3-deoxy-D-manno-octulosonate biosynthesis; 3-deoxy-D-manno-octulosonate from D-ribulose 5-phosphate: step 2/3. Its pathway is bacterial outer membrane biogenesis; lipopolysaccharide biosynthesis. The polypeptide is 2-dehydro-3-deoxyphosphooctonate aldolase (Burkholderia orbicola (strain MC0-3)).